The following is a 424-amino-acid chain: UPF0415 protein C7orf25 homolog (424 aa).

Belongs to the UPF0415 family.

This chain is UPF0415 protein C7orf25 homolog, found in Xenopus tropicalis (Western clawed frog).